A 510-amino-acid chain; its full sequence is Light-independent protochlorophyllide reductase subunit B (510 aa).

Position 36 (D36) interacts with [4Fe-4S] cluster. The active-site Proton donor is the D296. 431-432 contacts substrate; it reads GM.

It belongs to the ChlB/BchB/BchZ family. As to quaternary structure, protochlorophyllide reductase is composed of three subunits; ChlL, ChlN and ChlB. Forms a heterotetramer of two ChlB and two ChlN subunits. Requires [4Fe-4S] cluster as cofactor.

Its subcellular location is the plastid. It is found in the chloroplast. The enzyme catalyses chlorophyllide a + oxidized 2[4Fe-4S]-[ferredoxin] + 2 ADP + 2 phosphate = protochlorophyllide a + reduced 2[4Fe-4S]-[ferredoxin] + 2 ATP + 2 H2O. The protein operates within porphyrin-containing compound metabolism; chlorophyll biosynthesis (light-independent). Its function is as follows. Component of the dark-operative protochlorophyllide reductase (DPOR) that uses Mg-ATP and reduced ferredoxin to reduce ring D of protochlorophyllide (Pchlide) to form chlorophyllide a (Chlide). This reaction is light-independent. The NB-protein (ChlN-ChlB) is the catalytic component of the complex. In Auxenochlorella protothecoides (Green microalga), this protein is Light-independent protochlorophyllide reductase subunit B.